Consider the following 316-residue polypeptide: tRNA-cytidine(32) 2-sulfurtransferase (316 aa).

The PP-loop motif motif lies at 58–63; it reads SGGKDS. Residues Cys-133, Cys-136, and Cys-224 each contribute to the [4Fe-4S] cluster site.

Belongs to the TtcA family. Homodimer. Mg(2+) is required as a cofactor. The cofactor is [4Fe-4S] cluster.

The protein resides in the cytoplasm. The enzyme catalyses cytidine(32) in tRNA + S-sulfanyl-L-cysteinyl-[cysteine desulfurase] + AH2 + ATP = 2-thiocytidine(32) in tRNA + L-cysteinyl-[cysteine desulfurase] + A + AMP + diphosphate + H(+). It participates in tRNA modification. Catalyzes the ATP-dependent 2-thiolation of cytidine in position 32 of tRNA, to form 2-thiocytidine (s(2)C32). The sulfur atoms are provided by the cysteine/cysteine desulfurase (IscS) system. In Aromatoleum aromaticum (strain DSM 19018 / LMG 30748 / EbN1) (Azoarcus sp. (strain EbN1)), this protein is tRNA-cytidine(32) 2-sulfurtransferase.